A 140-amino-acid chain; its full sequence is Nucleoside diphosphate kinase (140 aa).

Positions 9, 57, 85, 91, 102, and 112 each coordinate ATP. His-115 functions as the Pros-phosphohistidine intermediate in the catalytic mechanism.

Belongs to the NDK family. Homotetramer. Mg(2+) serves as cofactor.

Its subcellular location is the cytoplasm. The enzyme catalyses a 2'-deoxyribonucleoside 5'-diphosphate + ATP = a 2'-deoxyribonucleoside 5'-triphosphate + ADP. It catalyses the reaction a ribonucleoside 5'-diphosphate + ATP = a ribonucleoside 5'-triphosphate + ADP. Functionally, major role in the synthesis of nucleoside triphosphates other than ATP. The ATP gamma phosphate is transferred to the NDP beta phosphate via a ping-pong mechanism, using a phosphorylated active-site intermediate. This is Nucleoside diphosphate kinase from Chlorobium luteolum (strain DSM 273 / BCRC 81028 / 2530) (Pelodictyon luteolum).